The sequence spans 184 residues: Probable type 3 secretion system regulator AscH (184 aa).

The interval 1–25 is disordered; the sequence is MKIEGSDQLGGEQPQRQPLPPESMA.

Belongs to the YopR family.

It localises to the secreted. Its function is as follows. May be involved in the regulation of the assembly of the type III secretion system (T3SS), also called injectisome, which is used to inject bacterial effector proteins into eukaryotic host cells. May control the polymerization of the needle. This is Probable type 3 secretion system regulator AscH from Aeromonas salmonicida subsp. salmonicida.